Here is a 91-residue protein sequence, read N- to C-terminus: Small ribosomal subunit protein bS16 (91 aa).

Belongs to the bacterial ribosomal protein bS16 family.

In Streptococcus mutans serotype c (strain ATCC 700610 / UA159), this protein is Small ribosomal subunit protein bS16.